The following is a 581-amino-acid chain: MPKQLSFSNESREALEKGINTVANAVKVTIGPKAKNVVIERKFGSPDIVRDGSTVAKEINLDNPISNLGAKLIEQVASKTKESAGDGTTTATILTQIMVQEGLKNIAAGASPIELKKGMEKGLNFVLEKLRSKSIKINGSDIKKVATVSAGGDEDIGSIISKAMDIVTSDGVITVEESQSLETELDITEGMSFDRGYSSPYFVTDQERQICELENPKILITDQKISTLTNLVPILEEVQKSASPFLILAEDIEGEALTTLVLNKNSGVLNVSAVRAPSFGERRKAALEDIAILTGAKLISEDQSMKLEEVTLNDLGKAKKITISKDKTTIVAFDDTKDLVQERVEKLKREVEITESEYDKDKINERIAKLAGGVALIKVGAATETEMKYKKLRIEDSLNATKAAIEEGVVSGGGQTLIEISNELSNSRKEISDDLTTGIDIITNALLEPTKQIAKNAGFNGDVVIADIKRLGKGFNANNGEYENLNESGILDPTKVIRLALQDSVSIAAMIITTEVAVADIPEPEAAPGGPGADPMGGMGGMGGMGGMGGMGMPGMGGMGMPGMGGMGMPGMGGMGMPGMM.

Residues 29 to 32, 86 to 90, G413, and D492 each bind ATP; these read TIGP and DGTTT.

This sequence belongs to the chaperonin (HSP60) family. As to quaternary structure, forms a cylinder of 14 subunits composed of two heptameric rings stacked back-to-back. Interacts with the co-chaperonin GroES.

It is found in the cytoplasm. The enzyme catalyses ATP + H2O + a folded polypeptide = ADP + phosphate + an unfolded polypeptide.. Functionally, together with its co-chaperonin GroES, plays an essential role in assisting protein folding. The GroEL-GroES system forms a nano-cage that allows encapsulation of the non-native substrate proteins and provides a physical environment optimized to promote and accelerate protein folding. This is Chaperonin GroEL 1 from Prochlorococcus marinus subsp. pastoris (strain CCMP1986 / NIES-2087 / MED4).